The sequence spans 1351 residues: Serine-rich adhesin for platelets (1351 aa).

The signal sequence occupies residues Met-1–Phe-89. Residues Ala-90–Ala-230 form a serine-rich repeat region 1, SRR1 region. The segment covering Leu-100 to Asn-111 has biased composition (polar residues). 2 disordered regions span residues Leu-100–Ser-228 and Asn-751–Gly-1323. Low complexity-rich tracts occupy residues Ser-112–Ser-133 and Asn-149–Ser-228. Residues Pro-231–Asn-751 form a non-repeat region (NRR) region. A compositionally biased stretch (low complexity) spans Ser-752–Glu-1294. The interval Ser-752–Thr-1312 is serine-rich repeat region 1, SRR1. Residues Leu-1309–Gly-1313 carry the LPXTG sorting signal motif. Thr-1312 is subject to Pentaglycyl murein peptidoglycan amidated threonine. A propeptide spans Gly-1313 to Ala-1351 (removed by sortase).

This sequence belongs to the serine-rich repeat protein (SRRP) family. Proteolytically cleaved by a metalloprotease. Post-translationally, glycosylated. It is probable that most of the Ser residues in SSR1 and SSR2 are O-GlcNAcylated. Sequential glycosylation by sugar transferases are able to generate complex sugar polymorphisms.

It localises to the secreted. The protein resides in the cell wall. Functionally, mediates binding to human platelets, possibly through a receptor-ligand interaction. Probably associated with virulence in endovascular infection. In Staphylococcus aureus (strain MRSA252), this protein is Serine-rich adhesin for platelets (sasA).